Consider the following 115-residue polypeptide: uncharacterized protein (115 aa).

This is an uncharacterized protein from Acidianus convivator (ATV).